Here is a 303-residue protein sequence, read N- to C-terminus: GTPase Era (303 aa).

The region spanning 9-176 (KSGFVSIIGR…VEQIVEHMEE (168 aa)) is the Era-type G domain. Residues 17-24 (GRPNVGKS) form a G1 region. 17 to 24 (GRPNVGKS) contacts GTP. The interval 43-47 (QTTRN) is G2. Residues 64–67 (DTPG) are G3. GTP is bound by residues 64 to 68 (DTPGI) and 126 to 129 (NKID). A G4 region spans residues 126-129 (NKID). The interval 155 to 157 (ISA) is G5. Residues 199–284 (IREKVLHLTK…YLELWVKVQK (86 aa)) form the KH type-2 domain.

It belongs to the TRAFAC class TrmE-Era-EngA-EngB-Septin-like GTPase superfamily. Era GTPase family. As to quaternary structure, monomer.

It localises to the cytoplasm. The protein resides in the cell membrane. Its function is as follows. An essential GTPase that binds both GDP and GTP, with rapid nucleotide exchange. Plays a role in 16S rRNA processing and 30S ribosomal subunit biogenesis and possibly also in cell cycle regulation and energy metabolism. The polypeptide is GTPase Era (Shouchella clausii (strain KSM-K16) (Alkalihalobacillus clausii)).